The chain runs to 246 residues: Chlorophyll a-b binding protein 6A, chloroplastic (246 aa).

The N-terminal 45 residues, 1–45 (MASNTLMSCGIPAVCPSFLSSTKSKFAAAMPVYVGATNFMSRFSM), are a transit peptide targeting the chloroplast. Trp-49 contacts chlorophyll b. Residues Phe-69, Glu-88, and His-91 each contribute to the chlorophyll a site. Residue Arg-93 participates in chlorophyll b binding. A helical membrane pass occupies residues 94–114 (WAMLAVPGIIVPEALGLGNWV). Leu-130 serves as a coordination point for chlorophyll a. Residues 133-153 (PVPWGTLPTILAIEFLAIAFV) form a helical membrane-spanning segment. Chlorophyll b is bound by residues Val-134, Glu-154, and Arg-157. The chlorophyll a site is built by Lys-191, Glu-192, Asn-195, Arg-197, Gln-209, and His-225.

Belongs to the light-harvesting chlorophyll a/b-binding (LHC) protein family. As to quaternary structure, the LHC complex consists of chlorophyll a-b binding proteins. Requires Binds at least 14 chlorophylls (8 Chl-a and 6 Chl-b) and carotenoids such as lutein and neoxanthin. as cofactor. Post-translationally, photoregulated by reversible phosphorylation of its threonine residues.

It localises to the plastid. The protein localises to the chloroplast thylakoid membrane. In terms of biological role, the light-harvesting complex (LHC) functions as a light receptor, it captures and delivers excitation energy to photosystems with which it is closely associated. The polypeptide is Chlorophyll a-b binding protein 6A, chloroplastic (CAB6A) (Solanum lycopersicum (Tomato)).